The sequence spans 250 residues: 2,3-bisphosphoglycerate-dependent phosphoglycerate mutase (250 aa).

Residues 8 to 15 (RHGESEWN), 21 to 22 (TG), arginine 60, 87 to 90 (ERHY), lysine 98, 114 to 115 (RR), and 183 to 184 (GN) contribute to the substrate site. Histidine 9 acts as the Tele-phosphohistidine intermediate in catalysis. Glutamate 87 acts as the Proton donor/acceptor in catalysis.

Belongs to the phosphoglycerate mutase family. BPG-dependent PGAM subfamily.

It catalyses the reaction (2R)-2-phosphoglycerate = (2R)-3-phosphoglycerate. It participates in carbohydrate degradation; glycolysis; pyruvate from D-glyceraldehyde 3-phosphate: step 3/5. Its function is as follows. Catalyzes the interconversion of 2-phosphoglycerate and 3-phosphoglycerate. This is 2,3-bisphosphoglycerate-dependent phosphoglycerate mutase from Borrelia duttonii (strain Ly).